Consider the following 360-residue polypeptide: Phospho-N-acetylmuramoyl-pentapeptide-transferase (360 aa).

The next 10 helical transmembrane spans lie at 26-46 (TILGVLTALGIALLVGPAVIQ), 70-90 (GTPTMGGALILVAIAVATLLW), 97-117 (YVWVVLLTTLAFGVIGGVDDY), 132-152 (AKFFWQTVVALMAAVFLFSTA), 168-188 (VVLPLGLLFIPLVWLVVVGSS), 199-219 (GLAILPSVLVAGGLAVFAYAT), 236-256 (AGEVVVFCGALIGAGLGFLWF), 263-283 (VFMGDVGALALGAALGILAVV), 288-308 (LVLLIMGGVFVVETLSVMLQV), and 338-358 (VIVRFWIITVVLVLVGLAMLK).

The protein belongs to the glycosyltransferase 4 family. MraY subfamily. The cofactor is Mg(2+).

The protein localises to the cell inner membrane. It carries out the reaction UDP-N-acetyl-alpha-D-muramoyl-L-alanyl-gamma-D-glutamyl-meso-2,6-diaminopimeloyl-D-alanyl-D-alanine + di-trans,octa-cis-undecaprenyl phosphate = di-trans,octa-cis-undecaprenyl diphospho-N-acetyl-alpha-D-muramoyl-L-alanyl-D-glutamyl-meso-2,6-diaminopimeloyl-D-alanyl-D-alanine + UMP. It functions in the pathway cell wall biogenesis; peptidoglycan biosynthesis. Functionally, catalyzes the initial step of the lipid cycle reactions in the biosynthesis of the cell wall peptidoglycan: transfers peptidoglycan precursor phospho-MurNAc-pentapeptide from UDP-MurNAc-pentapeptide onto the lipid carrier undecaprenyl phosphate, yielding undecaprenyl-pyrophosphoryl-MurNAc-pentapeptide, known as lipid I. The polypeptide is Phospho-N-acetylmuramoyl-pentapeptide-transferase (Alkalilimnicola ehrlichii (strain ATCC BAA-1101 / DSM 17681 / MLHE-1)).